A 692-amino-acid chain; its full sequence is Elongation factor G (692 aa).

Residues 8 to 282 form the tr-type G domain; the sequence is ENTRNIGIMA…AVIDYLPSPL (275 aa). GTP contacts are provided by residues 17-24, 81-85, and 135-138; these read AHIDAGKT, DTPGH, and NKMD.

The protein belongs to the TRAFAC class translation factor GTPase superfamily. Classic translation factor GTPase family. EF-G/EF-2 subfamily.

It localises to the cytoplasm. Functionally, catalyzes the GTP-dependent ribosomal translocation step during translation elongation. During this step, the ribosome changes from the pre-translocational (PRE) to the post-translocational (POST) state as the newly formed A-site-bound peptidyl-tRNA and P-site-bound deacylated tRNA move to the P and E sites, respectively. Catalyzes the coordinated movement of the two tRNA molecules, the mRNA and conformational changes in the ribosome. This chain is Elongation factor G, found in Bacillus cytotoxicus (strain DSM 22905 / CIP 110041 / 391-98 / NVH 391-98).